The chain runs to 255 residues: Imidazole glycerol phosphate synthase subunit HisF (255 aa).

Active-site residues include D11 and D130.

It belongs to the HisA/HisF family. In terms of assembly, heterodimer of HisH and HisF.

The protein resides in the cytoplasm. It catalyses the reaction 5-[(5-phospho-1-deoxy-D-ribulos-1-ylimino)methylamino]-1-(5-phospho-beta-D-ribosyl)imidazole-4-carboxamide + L-glutamine = D-erythro-1-(imidazol-4-yl)glycerol 3-phosphate + 5-amino-1-(5-phospho-beta-D-ribosyl)imidazole-4-carboxamide + L-glutamate + H(+). The protein operates within amino-acid biosynthesis; L-histidine biosynthesis; L-histidine from 5-phospho-alpha-D-ribose 1-diphosphate: step 5/9. IGPS catalyzes the conversion of PRFAR and glutamine to IGP, AICAR and glutamate. The HisF subunit catalyzes the cyclization activity that produces IGP and AICAR from PRFAR using the ammonia provided by the HisH subunit. The polypeptide is Imidazole glycerol phosphate synthase subunit HisF (Campylobacter jejuni (strain RM1221)).